Here is a 430-residue protein sequence, read N- to C-terminus: Aspartate aminotransferase, mitochondrial (430 aa).

Residues 1 to 29 (MALLHSGRVLSGIAAAFHPGLAAAASARA) constitute a mitochondrion transit peptide. Thr-48 is subject to Phosphothreonine. Lys-59 is subject to N6-acetyllysine. Gly-65 is a binding site for substrate. Lys-73 is subject to N6-acetyllysine; alternate. At Lys-73 the chain carries N6-succinyllysine; alternate. Residue Lys-82 is modified to N6-acetyllysine. Lys-90 is subject to N6-acetyllysine; alternate. Lys-90 carries the post-translational modification N6-succinyllysine; alternate. Position 96 is a 3'-nitrotyrosine; alternate (Tyr-96). Tyr-96 bears the Phosphotyrosine; alternate mark. An N6-acetyllysine; alternate mark is found at Lys-107 and Lys-122. 2 positions are modified to N6-succinyllysine; alternate: Lys-107 and Lys-122. Residue Ser-143 is modified to Phosphoserine. N6-acetyllysine; alternate is present on Lys-159. At Lys-159 the chain carries N6-succinyllysine; alternate. Trp-162 contacts substrate. Residue Lys-185 is modified to N6-acetyllysine; alternate. Lys-185 carries the post-translational modification N6-succinyllysine; alternate. Residue Asn-215 participates in substrate binding. Lys-227 carries the post-translational modification N6-succinyllysine. Position 234 is an N6-acetyllysine (Lys-234). Lys-279 and Lys-296 each carry N6-acetyllysine; alternate. Position 279 is an N6-(pyridoxal phosphate)lysine; alternate (Lys-279). Lys-296 is subject to N6-succinyllysine; alternate. Position 302 is an N6-acetyllysine (Lys-302). The residue at position 309 (Lys-309) is an N6-acetyllysine; alternate. Lys-309 is modified (N6-succinyllysine; alternate). Arg-313 carries the post-translational modification Asymmetric dimethylarginine. Phosphothreonine is present on Thr-333. N6-acetyllysine; alternate is present on Lys-338. Lys-338 is subject to N6-succinyllysine; alternate. Lys-345 carries the N6-acetyllysine modification. Position 363 is an N6-acetyllysine; alternate (Lys-363). N6-succinyllysine; alternate is present on Lys-363. N6-acetyllysine occurs at positions 364 and 387. N6-acetyllysine; alternate occurs at positions 396 and 404. Lys-396 and Lys-404 each carry N6-succinyllysine; alternate. Arg-407 serves as a coordination point for substrate.

The protein belongs to the class-I pyridoxal-phosphate-dependent aminotransferase family. Homodimer. It depends on pyridoxal 5'-phosphate as a cofactor.

The protein localises to the mitochondrion matrix. Its subcellular location is the cell membrane. It carries out the reaction L-aspartate + 2-oxoglutarate = oxaloacetate + L-glutamate. The catalysed reaction is L-kynurenine + 2-oxoglutarate = kynurenate + L-glutamate + H2O. Its function is as follows. Catalyzes the irreversible transamination of the L-tryptophan metabolite L-kynurenine to form kynurenic acid (KA). As a member of the malate-aspartate shuttle, it has a key role in the intracellular NAD(H) redox balance. Is important for metabolite exchange between mitochondria and cytosol, and for amino acid metabolism. Facilitates cellular uptake of long-chain free fatty acids. The sequence is that of Aspartate aminotransferase, mitochondrial (GOT2) from Macaca fascicularis (Crab-eating macaque).